The sequence spans 324 residues: Quinolinate synthase (324 aa).

Iminosuccinate-binding residues include histidine 39 and serine 56. Cysteine 101 provides a ligand contact to [4Fe-4S] cluster. Iminosuccinate-binding positions include 127-129 (YIN) and serine 144. A [4Fe-4S] cluster-binding site is contributed by cysteine 187. Residues 213–215 (HPE) and threonine 230 each bind iminosuccinate. Residue cysteine 280 coordinates [4Fe-4S] cluster.

This sequence belongs to the quinolinate synthase family. Type 2 subfamily. The cofactor is [4Fe-4S] cluster.

The protein localises to the cytoplasm. It carries out the reaction iminosuccinate + dihydroxyacetone phosphate = quinolinate + phosphate + 2 H2O + H(+). The protein operates within cofactor biosynthesis; NAD(+) biosynthesis; quinolinate from iminoaspartate: step 1/1. In terms of biological role, catalyzes the condensation of iminoaspartate with dihydroxyacetone phosphate to form quinolinate. The polypeptide is Quinolinate synthase (Trichormus variabilis (strain ATCC 29413 / PCC 7937) (Anabaena variabilis)).